The chain runs to 151 residues: UPF0178 protein Swoo_1444 (151 aa).

It belongs to the UPF0178 family.

This chain is UPF0178 protein Swoo_1444, found in Shewanella woodyi (strain ATCC 51908 / MS32).